Consider the following 330-residue polypeptide: 6-methylsalicylic acid decarboxylase acuB (330 aa).

Residues H6, H8, H156, and D276 each contribute to the Zn(2+) site.

It belongs to the metallo-dependent hydrolases superfamily. ACMSD family. In terms of assembly, monomer.

It localises to the cytoplasm. The protein localises to the cytosol. It catalyses the reaction 6-methylsalicylate + H(+) = 3-methylphenol + CO2. It functions in the pathway secondary metabolite biosynthesis. Its function is as follows. 6-methylsalicylic acid decarboxylase; part of the gene cluster that mediates the biosynthesis of aculins. The pathway begins with the synthesis of 6-methylsalicylic acid by the polyketide synthase (PKS) acuA via condensation of acetate and malonate units. The 6-methylsalicylic acid decarboxylase acuB then catalyzes the decarboxylation of 6-methylsalicylic acid to yield m-cresol (also known as 3-methylphenol). These first reactions occur in the cytosol. The intermediate m-cresol is then transported into the endoplasmic reticulum where the cytochrome P450 monooxygenase acuC converts it to m-hydroxybenzyl alcohol, which is further converted to gentisyl alcohol by the cytochrome P450 monooxygenase acuD. Gentisyl alcohol is further oxidized by the oxidoreductase acuE that probably catalyzes hydroxylation of the aromatic ring. The aromatic system might then be opened by oxidation through a Baeyer-Villiger type of oxidation, which could be catalyzed by acuF, with the carboxylic acid at C-1 subsequently reduced to an aldehyde by acuG. Subsequently, a hemiacetal is formed, before the dehydrogenase acuH would reduce the double bond between C-4 and C-6. Finally, keto-enol tautomerism results in formation of aculinic acid, which exists as two diastereomers (both R/S configurations at C-1) by non-enzymatic hemiacetal formation. The carboxypeptidase acuI could be involved in the linking of aculinic acid to an aculene A moiety produced by the aculene biosynthesis cluster and which leads to the production of aculin A. AcuI may also be involved in the attachment of proline to aculinic acid to form epi-aculins A and B. This Aspergillus aculeatus (strain ATCC 16872 / CBS 172.66 / WB 5094) protein is 6-methylsalicylic acid decarboxylase acuB.